A 599-amino-acid polypeptide reads, in one-letter code: Elongation factor 4 (599 aa).

In terms of domain architecture, tr-type G spans 2-184 (KNIRNFSIIA…RLVRDIPPPE (183 aa)). GTP-binding positions include 14–19 (DHGKST) and 131–134 (NKID).

This sequence belongs to the TRAFAC class translation factor GTPase superfamily. Classic translation factor GTPase family. LepA subfamily.

It is found in the cell inner membrane. The enzyme catalyses GTP + H2O = GDP + phosphate + H(+). Functionally, required for accurate and efficient protein synthesis under certain stress conditions. May act as a fidelity factor of the translation reaction, by catalyzing a one-codon backward translocation of tRNAs on improperly translocated ribosomes. Back-translocation proceeds from a post-translocation (POST) complex to a pre-translocation (PRE) complex, thus giving elongation factor G a second chance to translocate the tRNAs correctly. Binds to ribosomes in a GTP-dependent manner. This is Elongation factor 4 from Klebsiella pneumoniae (strain 342).